Reading from the N-terminus, the 71-residue chain is uncharacterized protein (71 aa).

A signal peptide spans 1–26 (MIKFSVILGMIRCSLTHITTKNTVNA).

This is an uncharacterized protein from Bacillus subtilis (strain 168).